Consider the following 172-residue polypeptide: Low molecular mass early light-inducible protein HV90, chloroplastic (172 aa).

Residues 1–38 (MATMMSMSSFAGAAVVPRSSASSFGARSLPALGRRALV) constitute a chloroplast transit peptide. Transmembrane regions (helical) follow at residues 106–126 (GQAW…VPLL) and 150–170 (FAML…APFI).

The protein belongs to the ELIP/psbS family.

The protein localises to the plastid. Its subcellular location is the chloroplast membrane. Its function is as follows. Probably involved in the integration of pigments into the mature pigment-protein complexes. The sequence is that of Low molecular mass early light-inducible protein HV90, chloroplastic from Hordeum vulgare (Barley).